Reading from the N-terminus, the 732-residue chain is Subtilisin-like protease SBT4.13 (732 aa).

Residues 1–24 (MATLAASSSLLSCLLVLFLSSVSA) form the signal peptide. A propeptide spans 25-109 (VTDDKQVYIV…VFPNKKLQLQ (85 aa)) (activation peptide). One can recognise an Inhibitor I9 domain in the interval 31-108 (VYIVYMGSLS…SVFPNKKLQL (78 aa)). Residues 113–579 (SWDFMGLKEG…SGHVDPIAAS (467 aa)) form the Peptidase S8 domain. Asp141 (charge relay system) is an active-site residue. N-linked (GlcNAc...) asparagine glycosylation occurs at Asn172. Residue His196 is the Charge relay system of the active site. A glycan (N-linked (GlcNAc...) asparagine) is linked at Asn219. The PA domain occupies 352-436 (DYPLVYGKSA…GLLTEDFESL (85 aa)). The N-linked (GlcNAc...) asparagine glycan is linked to Asn458. Ser518 (charge relay system) is an active-site residue. N-linked (GlcNAc...) asparagine glycans are attached at residues Asn555, Asn600, Asn648, and Asn658.

Belongs to the peptidase S8 family. Post-translationally, the C-terminal propeptide is autocleaved.

Its subcellular location is the secreted. This Arabidopsis thaliana (Mouse-ear cress) protein is Subtilisin-like protease SBT4.13.